Consider the following 634-residue polypeptide: Chaperone protein dnaK2 (634 aa).

Residue threonine 197 is modified to Phosphothreonine; by autocatalysis. Residues 601–623 show a composition bias toward low complexity; the sequence is GAAAAESGADAGAAGAGDSSSGD. Residues 601-634 form a disordered region; sequence GAAAAESGADAGAAGAGDSSSGDDVIDAEFTESK. Over residues 624 to 634 the composition is skewed to acidic residues; the sequence is DVIDAEFTESK.

The protein belongs to the heat shock protein 70 family.

Acts as a chaperone. The chain is Chaperone protein dnaK2 (dnaK2) from Prochlorococcus marinus (strain MIT 9313).